The following is a 203-amino-acid chain: Meiotically up-regulated protein PB17E12.09 (203 aa).

The stretch at 92–177 forms a coiled coil; the sequence is CNRKIEGYIK…KEMQLYMTKI (86 aa).

The protein localises to the cytoplasm. In terms of biological role, has a role in meiosis and sporulation. The protein is Meiotically up-regulated protein PB17E12.09 of Schizosaccharomyces pombe (strain 972 / ATCC 24843) (Fission yeast).